The chain runs to 670 residues: DNA ligase (670 aa).

NAD(+) is bound by residues 32–36, 81–82, and glutamate 113; these read DAEYD and SL. Lysine 115 (N6-AMP-lysine intermediate) is an active-site residue. NAD(+) contacts are provided by arginine 136, glutamate 173, lysine 290, and lysine 314. Zn(2+) contacts are provided by cysteine 408, cysteine 411, cysteine 426, and cysteine 432. In terms of domain architecture, BRCT spans 592–670; the sequence is ESDSPFAGKT…EAEMIRLLGE (79 aa).

The protein belongs to the NAD-dependent DNA ligase family. LigA subfamily. It depends on Mg(2+) as a cofactor. The cofactor is Mn(2+).

The enzyme catalyses NAD(+) + (deoxyribonucleotide)n-3'-hydroxyl + 5'-phospho-(deoxyribonucleotide)m = (deoxyribonucleotide)n+m + AMP + beta-nicotinamide D-nucleotide.. In terms of biological role, DNA ligase that catalyzes the formation of phosphodiester linkages between 5'-phosphoryl and 3'-hydroxyl groups in double-stranded DNA using NAD as a coenzyme and as the energy source for the reaction. It is essential for DNA replication and repair of damaged DNA. The sequence is that of DNA ligase from Yersinia pestis bv. Antiqua (strain Antiqua).